A 219-amino-acid chain; its full sequence is Thiopurine S-methyltransferase (219 aa).

S-adenosyl-L-methionine is bound by residues tryptophan 10, leucine 45, glutamate 66, and arginine 123.

Belongs to the class I-like SAM-binding methyltransferase superfamily. TPMT family.

Its subcellular location is the cytoplasm. It carries out the reaction S-adenosyl-L-methionine + a thiopurine = S-adenosyl-L-homocysteine + a thiopurine S-methylether.. The chain is Thiopurine S-methyltransferase from Marinobacter nauticus (strain ATCC 700491 / DSM 11845 / VT8) (Marinobacter aquaeolei).